Consider the following 262-residue polypeptide: MTILNEIIEYKKTLLERKYYDKKLEILQDNGNVKRRKLIDSLNYDRTLSVIAEIKSKSPSVPQLPQRDLVQQVKDYQKYGANAISILTDEKYFGGSFERLNQLSKITSLPVLCKDFIIDKIQIDVAKRAGASIILLIVNILSDDQLKELYSYATNHNLEALVEVHTIRELERAHQINPKIIGVNNRDLKRFETDVLHTNKLLKFKKSNCCYISESGIHTKEDVEKIVDSSIDGLLVGEALMKTNDLSQFLPSLKLKKNLYDS.

The protein belongs to the TrpC family.

The enzyme catalyses 1-(2-carboxyphenylamino)-1-deoxy-D-ribulose 5-phosphate + H(+) = (1S,2R)-1-C-(indol-3-yl)glycerol 3-phosphate + CO2 + H2O. Its pathway is amino-acid biosynthesis; L-tryptophan biosynthesis; L-tryptophan from chorismate: step 4/5. This is Indole-3-glycerol phosphate synthase from Staphylococcus epidermidis (strain ATCC 35984 / DSM 28319 / BCRC 17069 / CCUG 31568 / BM 3577 / RP62A).